Consider the following 530-residue polypeptide: Proline--tRNA ligase, cytoplasmic (530 aa).

This sequence belongs to the class-II aminoacyl-tRNA synthetase family.

The protein localises to the cytoplasm. The protein resides in the cytosol. The catalysed reaction is tRNA(Pro) + L-proline + ATP = L-prolyl-tRNA(Pro) + AMP + diphosphate. Functionally, catalyzes the attachment of proline to tRNA(Pro) in a two-step reaction: proline is first activated by ATP to form Pro-AMP and then transferred to the acceptor end of tRNA(Pro). This is Proline--tRNA ligase, cytoplasmic from Arabidopsis thaliana (Mouse-ear cress).